A 468-amino-acid polypeptide reads, in one-letter code: Acetyl-CoA decarbonylase/synthase complex subunit gamma (468 aa).

The region spanning methionine 1 to aspartate 60 is the 4Fe-4S domain. Positions 18, 21, 26, and 43 each coordinate [4Fe-4S] cluster.

As to quaternary structure, heterodimer of delta and gamma chains. The ACDS complex is made up of alpha, epsilon, beta, gamma and delta chains with a probable stoichiometry of (alpha(2)epsilon(2))(4)-beta(8)-(gamma(1)delta(1))(8). The cofactor is corrinoid. It depends on [4Fe-4S] cluster as a cofactor.

The catalysed reaction is 5,6,7,8-tetrahydrosarcinapterin + methyl-Co(III)-[corrinoid Fe-S protein] = 5-methyltetrahydrosarcinapterin + Co(I)-[corrinoid Fe-S protein] + H(+). Its pathway is one-carbon metabolism; methanogenesis from acetate. In terms of biological role, part of a complex that catalyzes the reversible cleavage of acetyl-CoA, allowing growth on acetate as sole source of carbon and energy. This Methanosarcina acetivorans (strain ATCC 35395 / DSM 2834 / JCM 12185 / C2A) protein is Acetyl-CoA decarbonylase/synthase complex subunit gamma.